We begin with the raw amino-acid sequence, 345 residues long: Uroporphyrinogen decarboxylase (345 aa).

Substrate-binding positions include 27–31 (RQAGR), Phe-46, Asp-76, Tyr-152, Ser-207, and His-320.

Belongs to the uroporphyrinogen decarboxylase family. Homodimer.

Its subcellular location is the cytoplasm. It carries out the reaction uroporphyrinogen III + 4 H(+) = coproporphyrinogen III + 4 CO2. Its pathway is porphyrin-containing compound metabolism; protoporphyrin-IX biosynthesis; coproporphyrinogen-III from 5-aminolevulinate: step 4/4. In terms of biological role, catalyzes the decarboxylation of four acetate groups of uroporphyrinogen-III to yield coproporphyrinogen-III. The chain is Uroporphyrinogen decarboxylase from Geobacillus sp. (strain WCH70).